Here is a 251-residue protein sequence, read N- to C-terminus: Ditrans,polycis-undecaprenyl-diphosphate synthase ((2E,6E)-farnesyl-diphosphate specific) (251 aa).

Residue Asp-29 is part of the active site. Residue Asp-29 participates in Mg(2+) binding. Substrate contacts are provided by residues Gly-30–Lys-33, Trp-34, Arg-42, His-46, and Ser-74–Asp-76. Asn-77 functions as the Proton acceptor in the catalytic mechanism. Residues Trp-78, Arg-80, Arg-197, and Arg-203–Ser-205 contribute to the substrate site. Position 216 (Glu-216) interacts with Mg(2+).

It belongs to the UPP synthase family. As to quaternary structure, homodimer. It depends on Mg(2+) as a cofactor.

It carries out the reaction 8 isopentenyl diphosphate + (2E,6E)-farnesyl diphosphate = di-trans,octa-cis-undecaprenyl diphosphate + 8 diphosphate. Functionally, catalyzes the sequential condensation of isopentenyl diphosphate (IPP) with (2E,6E)-farnesyl diphosphate (E,E-FPP) to yield (2Z,6Z,10Z,14Z,18Z,22Z,26Z,30Z,34E,38E)-undecaprenyl diphosphate (di-trans,octa-cis-UPP). UPP is the precursor of glycosyl carrier lipid in the biosynthesis of bacterial cell wall polysaccharide components such as peptidoglycan and lipopolysaccharide. This chain is Ditrans,polycis-undecaprenyl-diphosphate synthase ((2E,6E)-farnesyl-diphosphate specific), found in Buchnera aphidicola subsp. Baizongia pistaciae (strain Bp).